A 119-amino-acid polypeptide reads, in one-letter code: Beta-2-microglobulin (119 aa).

The first 20 residues, 1-20 (MARFVVVALLVQLSLFGLEA), serve as a signal peptide directing secretion. Residues 25–114 (PKIQVYSRYP…VTFSTPKTVK (90 aa)) form the Ig-like C1-type domain. C45 and C100 are joined by a disulfide.

This sequence belongs to the beta-2-microglobulin family. Heterodimer of an alpha chain and a beta chain. Beta-2-microglobulin is the beta-chain of major histocompatibility complex class I molecules.

Its subcellular location is the secreted. Its function is as follows. Component of the class I major histocompatibility complex (MHC). Involved in the presentation of peptide antigens to the immune system. This chain is Beta-2-microglobulin (B2M), found in Saguinus imperator (Emperor tamarin).